The following is a 466-amino-acid chain: ATP synthase subunit beta (466 aa).

153–160 lines the ATP pocket; it reads GGAGVGKT.

It belongs to the ATPase alpha/beta chains family. In terms of assembly, F-type ATPases have 2 components, CF(1) - the catalytic core - and CF(0) - the membrane proton channel. CF(1) has five subunits: alpha(3), beta(3), gamma(1), delta(1), epsilon(1). CF(0) has three main subunits: a(1), b(2) and c(9-12). The alpha and beta chains form an alternating ring which encloses part of the gamma chain. CF(1) is attached to CF(0) by a central stalk formed by the gamma and epsilon chains, while a peripheral stalk is formed by the delta and b chains.

It localises to the cell membrane. The catalysed reaction is ATP + H2O + 4 H(+)(in) = ADP + phosphate + 5 H(+)(out). Functionally, produces ATP from ADP in the presence of a proton gradient across the membrane. The catalytic sites are hosted primarily by the beta subunits. This Leuconostoc mesenteroides subsp. mesenteroides (strain ATCC 8293 / DSM 20343 / BCRC 11652 / CCM 1803 / JCM 6124 / NCDO 523 / NBRC 100496 / NCIMB 8023 / NCTC 12954 / NRRL B-1118 / 37Y) protein is ATP synthase subunit beta.